The chain runs to 409 residues: Nucleoprotein (409 aa).

Disordered stretches follow at residues 1-32, 46-84, 121-194, and 238-259; these read MASG…SSGN, SPQP…KGRR, ADVK…GSED, and VDQV…DKMN. The tract at residues 29-160 is RNA-binding; the sequence is SSGNASWFQA…GNFRWDFIPL (132 aa). The 126-residue stretch at 31 to 156 folds into the CoV N NTD domain; the sequence is GNASWFQAIK…GGPDGNFRWD (126 aa). The segment covering 70–84 has biased composition (basic residues); that stretch reads YWRRQARFKPGKGRR. Residues 162 to 179 show a composition bias toward low complexity; it reads RGRSGRSTAASSAASSRP. 2 stretches are compositionally biased toward basic and acidic residues: residues 180-192 and 247-259; these read PSRE…RSGS and KGKE…DKMN. Phosphoserine; by host is present on residues Ser190 and Ser192. Positions 215 to 331 constitute a CoV N CTD domain; that stretch reads TKAKADEMAH…QCVDGVGTRP (117 aa). Residues 226–333 form a dimerization region; sequence RYCKRTIPPG…VDGVGTRPKD (108 aa). A disulfide bridge links Cys320 with Cys323. Positions 326 to 409 are disordered; the sequence is GVGTRPKDDE…GDSALGENEL (84 aa). Low complexity predominate over residues 341–356; sequence RSSSRPATRTSSPAPR. Residues 358 to 367 are compositionally biased toward basic residues; it reads QRLKKEKRPK. A compositionally biased stretch (basic and acidic residues) spans 368–384; the sequence is KQDDEVDKALTSDEERN. Thr378 is modified (phosphothreonine; by host). Phosphoserine; by host is present on Ser379.

Belongs to the gammacoronavirus nucleocapsid protein family. As to quaternary structure, homooligomer. Both monomeric and oligomeric forms interact with RNA. Interacts with protein M. Interacts with NSP3; this interaction serves to tether the genome to the newly translated replicase-transcriptase complex at a very early stage of infection. Post-translationally, ADP-ribosylated. The ADP-ribosylation is retained in the virion during infection. In terms of processing, phosphorylated on serine and threonine residues.

It is found in the virion. The protein localises to the host endoplasmic reticulum-Golgi intermediate compartment. Its subcellular location is the host Golgi apparatus. In terms of biological role, packages the positive strand viral genome RNA into a helical ribonucleocapsid (RNP) and plays a fundamental role during virion assembly through its interactions with the viral genome and membrane protein M. Plays an important role in enhancing the efficiency of subgenomic viral RNA transcription as well as viral replication. This Avian infectious bronchitis virus (strain Gray) (IBV) protein is Nucleoprotein.